The chain runs to 321 residues: Small ribosomal subunit protein mS43 (321 aa).

The transit peptide at M1–Y13 directs the protein to the mitochondrion.

It belongs to the mitochondrion-specific ribosomal protein mS43 family. In terms of assembly, component of the mitochondrial small ribosomal subunit (mt-SSU). Mature yeast 74S mitochondrial ribosomes consist of a small (37S) and a large (54S) subunit. The 37S small subunit contains a 15S ribosomal RNA (15S mt-rRNA) and 34 different proteins. The 54S large subunit contains a 21S rRNA (21S mt-rRNA) and 46 different proteins. mS43 forms a heterodimer with mS42, building a large protuberance adjacent to the mRNA channel exit in the mt-SSU body.

Its subcellular location is the mitochondrion. Its function is as follows. Component of the mitochondrial ribosome (mitoribosome), a dedicated translation machinery responsible for the synthesis of mitochondrial genome-encoded proteins, including at least some of the essential transmembrane subunits of the mitochondrial respiratory chain. The mitoribosomes are attached to the mitochondrial inner membrane and translation products are cotranslationally integrated into the membrane. The protein is Small ribosomal subunit protein mS43 (MRP1) of Saccharomyces cerevisiae (strain ATCC 204508 / S288c) (Baker's yeast).